The following is a 631-amino-acid chain: RING finger protein 112 (631 aa).

The segment at 57–98 adopts an RING-type zinc-finger fold; it reads CSICLERLRDPISLDCGHDFCIRCFSTHRLPGCEPPCCPECR. Residues 131–631 form an interaction with ZBTB16 region; sequence PVRAEPLLLV…GDREPLLQEE (501 aa). The 232-residue stretch at 166-397 folds into the GB1/RHD3-type G domain; it reads DTPVCLLAVL…YVSDVLSAAP (232 aa). Position 318–319 (318–319) interacts with GTP; sequence RD. 2 helical membrane-spanning segments follow: residues 547–567 and 580–600; these read LAAVGGAVGAGLMGLAGGVVG and GMVAAGAAVGATGAAVVGGGV.

Belongs to the TRAFAC class dynamin-like GTPase superfamily. GB1/RHD3 GTPase family. GB1 subfamily. As to quaternary structure, self-associates. Interacts with SP1 in an oxidative stress-regulated manner. Interacts with SIGMAR1 in an oxidative stress-regulated manner. Interacts with ZBTB16 (via C2H2-type zinc finger domains 1 and 2). In terms of processing, auto-ubiquitinated. As to expression, predominantly expressed in brain. Decreased expression in glioma brain tumors as compared to normal brains (at protein level).

The protein localises to the membrane. Its subcellular location is the cytoplasm. It is found in the nucleus. It localises to the nuclear body. The protein resides in the nucleoplasm. The protein localises to the endosome. Its subcellular location is the cytoplasmic vesicle. It is found in the secretory vesicle. It localises to the synaptic vesicle. The protein resides in the postsynaptic density. The protein localises to the perikaryon. Its subcellular location is the cell projection. It is found in the neuron projection. It carries out the reaction S-ubiquitinyl-[E2 ubiquitin-conjugating enzyme]-L-cysteine + [acceptor protein]-L-lysine = [E2 ubiquitin-conjugating enzyme]-L-cysteine + N(6)-ubiquitinyl-[acceptor protein]-L-lysine.. The protein operates within protein modification; protein ubiquitination. E3 ubiquitin-protein ligase that plays an important role in neuronal differentiation, including neurogenesis and gliogenesis, during brain development. During embryonic development initiates neuronal differentiation by inducing cell cycle arrest at the G0/G1 phase through up-regulation of cell-cycle regulatory proteins. Plays a role not only in the fetal period during the development of the nervous system, but also in the adult brain, where it is involved in the maintenance of neural functions and protection of the nervous tissue cells from oxidative stress-induced damage. Exhibits GTPase and E3 ubiquitin-protein ligase activities. Regulates dendritic spine density and synaptic neurotransmission; its ability to hydrolyze GTP is involved in the maintenance of dendritic spine density. This is RING finger protein 112 (RNF112) from Homo sapiens (Human).